The following is a 308-amino-acid chain: Putative mitochondrial transporter UCP3 (308 aa).

Topologically, residues 1–10 (MVGLQPSEVP) are mitochondrial intermembrane. The helical transmembrane segment at 11-32 (PTTVVKFLGAGTAACFADLLTF) threads the bilayer. Solcar repeat units follow at residues 11 to 102 (PTTV…VKQF), 111 to 202 (SSVA…IKEK), and 211 to 296 (DNFP…LKRA). Residues 33-73 (PLDTAKVRLQIQGENPGVQSVQYRGVLGTILTMVRTEGPRS) are Mitochondrial matrix-facing. The chain crosses the membrane as a helical span at residues 74 to 96 (PYSGLVAGLHRQMSFASIRIGLY). Over 97 to 116 (DSVKQFYTPKGTDHSSVAIR) the chain is Mitochondrial intermembrane. A helical membrane pass occupies residues 117–133 (ILAGCTTGAMAVTCAQP). Over 134–179 (TDVVKVRFQAMIRLGTGGERKYRGTMDAYRTIAREEGVRGLWKGTW) the chain is Mitochondrial matrix. Residues 180–196 (PNITRNAIVNCAEMVTY) traverse the membrane as a helical segment. The Mitochondrial intermembrane segment spans residues 197–213 (DIIKEKLLDSHLFTDNF). A helical membrane pass occupies residues 214-233 (PCHFVSAFGAGFCATVVASP). At 234–267 (VDVVKTRYMNAPPGRYRSPLHCMLRMVAQEGPTA) the chain is on the mitochondrial matrix side. Residues 268-290 (FYKGFMPSFLRLGSWNVMMFVTY) form a helical membrane-spanning segment. Residues 275–297 (SFLRLGSWNVMMFVTYEQLKRAL) form a purine nucleotide binding region. At 291–308 (EQLKRALMKVQVLRESPF) the chain is on the mitochondrial intermembrane side.

The protein belongs to the mitochondrial carrier (TC 2.A.29) family. Interacts with HAX1; the interaction is direct and calcium-dependent.

The protein localises to the mitochondrion inner membrane. In terms of biological role, putative transmembrane transporter that plays a role in mitochondrial metabolism via an as yet unclear mechanism. Originally, this mitochondrial protein was thought to act as a proton transmembrane transporter from the mitochondrial intermembrane space into the matrix, causing proton leaks through the inner mitochondrial membrane, thereby uncoupling mitochondrial membrane potential generation from ATP synthesis. However, this function is controversial and uncoupling may not be the function, or at least not the main function, but rather a consequence of more conventional metabolite transporter activity. This Rattus norvegicus (Rat) protein is Putative mitochondrial transporter UCP3.